A 1077-amino-acid polypeptide reads, in one-letter code: ATP-dependent DNA helicase MPH1 (1077 aa).

The Helicase ATP-binding domain maps to Ile99 to Lys266. Residue Ile112 to Thr119 coordinates ATP. Residues Asp214 to His217 carry the DEAH box motif. The Helicase C-terminal domain maps to Lys511–Ile660. 2 disordered regions span residues Glu536–Met556 and Thr831–Gln859. Over residues Thr831–Asp841 the composition is skewed to polar residues.

The protein belongs to the DEAD box helicase family. DEAH subfamily. FANCM sub-subfamily. In terms of assembly, interacts with the MHF histone-fold complex to form the FANCM-MHF complex.

The protein resides in the nucleus. The enzyme catalyses ATP + H2O = ADP + phosphate + H(+). ATP-dependent DNA helicase involved in DNA damage repair by homologous recombination and in genome maintenance. Capable of unwinding D-loops. Plays a role in limiting crossover recombinants during mitotic DNA double-strand break (DSB) repair. Component of a FANCM-MHF complex which promotes gene conversion at blocked replication forks, probably by reversal of the stalled fork. The polypeptide is ATP-dependent DNA helicase MPH1 (Eremothecium gossypii (strain ATCC 10895 / CBS 109.51 / FGSC 9923 / NRRL Y-1056) (Yeast)).